The following is a 333-amino-acid chain: HTH-type transcriptional repressor PurR (333 aa).

The HTH lacI-type domain occupies 2-56 (ATIKDVAKMAGVSTTTVSHVINKTRFVAKETEQQVLQAIKNLNYSPSAVARSLKV). The segment at residues 4 to 23 (IKDVAKMAGVSTTTVSHVIN) is a DNA-binding region (H-T-H motif). Residues 48–56 (SAVARSLKV) mediate DNA binding. The hypoxanthine site is built by tyrosine 73, lysine 189, threonine 191, phenylalanine 220, and aspartate 274.

As to quaternary structure, homodimer.

It functions in the pathway purine metabolism; purine nucleotide biosynthesis [regulation]. Functionally, is the main repressor of the genes involved in the de novo synthesis of purine nucleotides, regulating purB, purC, purEK, purF, purHD, purL, purMN and guaBA expression. PurR is allosterically activated to bind its cognate DNA by binding the purine corepressors, hypoxanthine or guanine, thereby effecting transcription repression. In Histophilus somni (strain 129Pt) (Haemophilus somnus), this protein is HTH-type transcriptional repressor PurR.